Consider the following 398-residue polypeptide: Metal tolerance protein 1 (398 aa).

The Cytoplasmic portion of the chain corresponds to 1–56; it reads MESSSPHHSHIVEVNVGKSDEERIIVASKVCGEAPCGFSDSKNASGDAHERSASMR. A helical membrane pass occupies residues 57 to 77; it reads KLCIAVVLCLVFMSVEVVGGI. Residues 78–89 lie on the Vacuolar side of the membrane; it reads KANSLAILTDAA. A helical membrane pass occupies residues 90–110; the sequence is HLLSDVAAFAISLFSLWAAGW. Over 111–122 the chain is Cytoplasmic; sequence EATPRQTYGFFR. A helical membrane pass occupies residues 123–143; it reads IEILGALVSIQLIWLLTGILV. The Vacuolar segment spans residues 144 to 159; that stretch reads YEAIIRIVTETSEVNG. The helical transmembrane segment at 160–180 threads the bilayer; that stretch reads FLMFLVAAFGLVVNIIMAVLL. The Cytoplasmic segment spans residues 181–263; the sequence is GHDHGHSHGH…KRNINLQGAY (83 aa). The tract at residues 182–232 is required for zinc-binding; that stretch reads HDHGHSHGHGHGHGHDHHNHSHGVTVTTHHHHHDHEHGHSHGHGEDKHHAH. The interval 186–232 is disordered; that stretch reads HSHGHGHGHGHDHHNHSHGVTVTTHHHHHDHEHGHSHGHGEDKHHAH. Over residues 187 to 202 the composition is skewed to basic residues; it reads SHGHGHGHGHDHHNHS. Over residues 216 to 232 the composition is skewed to basic and acidic residues; that stretch reads HEHGHSHGHGEDKHHAH. The chain crosses the membrane as a helical span at residues 264–284; the sequence is LHVLGDSIQSVGVMIGGAIIW. Over 285-290 the chain is Vacuolar; the sequence is YNPEWK. Residues 291–311 form a helical membrane-spanning segment; the sequence is IVDLICTLAFSVIVLGTTINM. The Cytoplasmic portion of the chain corresponds to 312-398; it reads IRNILEVLME…ISHVTIQIER (87 aa).

It belongs to the cation diffusion facilitator (CDF) transporter (TC 2.A.4) family. SLC30A subfamily. In terms of tissue distribution, ubiquitously expressed at low levels.

It localises to the vacuole membrane. Its function is as follows. Mediates zinc accumulation in roots and confers resistance to zinc. Involved in sequestration of excess zinc in the cytoplasm into vacuoles to maintain zinc homeostasis. Can also transport cadmium with a low efficiency. The sequence is that of Metal tolerance protein 1 from Arabidopsis thaliana (Mouse-ear cress).